The sequence spans 73 residues: Sec-independent protein translocase protein TatA (73 aa).

The chain crosses the membrane as a helical span at residues 1–21; the sequence is MGSFSIWHWVIVLVVVVLIFG. A disordered region spans residues 43–73; that stretch reads MKSEGEDAAQTPPAAQKEGGRVIDAEPADKK. Basic and acidic residues predominate over residues 60–73; it reads EGGRVIDAEPADKK.

The protein belongs to the TatA/E family. The Tat system comprises two distinct complexes: a TatABC complex, containing multiple copies of TatA, TatB and TatC subunits, and a separate TatA complex, containing only TatA subunits. Substrates initially bind to the TatABC complex, which probably triggers association of the separate TatA complex to form the active translocon.

It is found in the cell inner membrane. Part of the twin-arginine translocation (Tat) system that transports large folded proteins containing a characteristic twin-arginine motif in their signal peptide across membranes. TatA could form the protein-conducting channel of the Tat system. In Laribacter hongkongensis (strain HLHK9), this protein is Sec-independent protein translocase protein TatA.